The chain runs to 668 residues: Type II methyltransferase M.MwoI (668 aa).

It belongs to the N(4)/N(6)-methyltransferase family. N(4) subfamily.

It carries out the reaction a 2'-deoxycytidine in DNA + S-adenosyl-L-methionine = an N(4)-methyl-2'-deoxycytidine in DNA + S-adenosyl-L-homocysteine + H(+). A beta subtype methylase, recognizes the double-stranded DNA sequence 5'-GCNNNNNNNGC-3', methylates C-2 on both strands, and protects the DNA from cleavage by the MwoI endonuclease. This Methanothermobacter wolfeii (Methanobacterium wolfei) protein is Type II methyltransferase M.MwoI.